The chain runs to 412 residues: Putative competence-damage inducible protein (412 aa).

Belongs to the CinA family.

This chain is Putative competence-damage inducible protein, found in Bacillus cereus (strain Q1).